Here is a 21-residue protein sequence, read N- to C-terminus: Venom peptide Ocy4 (21 aa).

As to expression, expressed by the venom gland.

Its subcellular location is the secreted. In Opisthacanthus cayaporum (South American scorpion), this protein is Venom peptide Ocy4.